The primary structure comprises 121 residues: NAD(P)H-quinone oxidoreductase subunit M (121 aa).

It belongs to the complex I NdhM subunit family. As to quaternary structure, NDH-1 can be composed of about 15 different subunits; different subcomplexes with different compositions have been identified which probably have different functions.

It is found in the cellular thylakoid membrane. The catalysed reaction is a plastoquinone + NADH + (n+1) H(+)(in) = a plastoquinol + NAD(+) + n H(+)(out). It carries out the reaction a plastoquinone + NADPH + (n+1) H(+)(in) = a plastoquinol + NADP(+) + n H(+)(out). Its function is as follows. NDH-1 shuttles electrons from an unknown electron donor, via FMN and iron-sulfur (Fe-S) centers, to quinones in the respiratory and/or the photosynthetic chain. The immediate electron acceptor for the enzyme in this species is believed to be plastoquinone. Couples the redox reaction to proton translocation, and thus conserves the redox energy in a proton gradient. Cyanobacterial NDH-1 also plays a role in inorganic carbon-concentration. The chain is NAD(P)H-quinone oxidoreductase subunit M from Nostoc punctiforme (strain ATCC 29133 / PCC 73102).